The following is a 429-amino-acid chain: Phosphomethylpyrimidine synthase (429 aa).

Substrate contacts are provided by residues asparagine 66, methionine 95, tyrosine 124, histidine 163, 185–187 (SRG), 226–229 (DGLR), and glutamate 265. Histidine 269 is a binding site for Zn(2+). Tyrosine 292 lines the substrate pocket. Histidine 333 serves as a coordination point for Zn(2+). Residues cysteine 409, cysteine 412, and cysteine 416 each contribute to the [4Fe-4S] cluster site.

This sequence belongs to the ThiC family. The cofactor is [4Fe-4S] cluster.

It catalyses the reaction 5-amino-1-(5-phospho-beta-D-ribosyl)imidazole + S-adenosyl-L-methionine = 4-amino-2-methyl-5-(phosphooxymethyl)pyrimidine + CO + 5'-deoxyadenosine + formate + L-methionine + 3 H(+). It participates in cofactor biosynthesis; thiamine diphosphate biosynthesis. In terms of biological role, catalyzes the synthesis of the hydroxymethylpyrimidine phosphate (HMP-P) moiety of thiamine from aminoimidazole ribotide (AIR) in a radical S-adenosyl-L-methionine (SAM)-dependent reaction. This Carboxydothermus hydrogenoformans (strain ATCC BAA-161 / DSM 6008 / Z-2901) protein is Phosphomethylpyrimidine synthase.